The sequence spans 214 residues: Cytochrome b (214 aa).

4 helical membrane-spanning segments follow: residues 31-51 (FGSM…FLAI), 75-96 (WIMQ…YTHI), 111-131 (WLSG…GYVL), and 176-196 (FFAL…IHII). Residues His81 and His95 each coordinate heme b. Heme b-binding residues include His180 and His194. His199 contacts a ubiquinone.

The protein belongs to the cytochrome b family. The cytochrome bc1 complex contains 3 respiratory subunits (MT-CYB, CYC1 and UQCRFS1), 2 core proteins (UQCRC1 and UQCRC2) and probably 6 low-molecular weight proteins. The cofactor is heme b.

The protein localises to the mitochondrion inner membrane. In terms of biological role, component of the ubiquinol-cytochrome c reductase complex (complex III or cytochrome b-c1 complex) that is part of the mitochondrial respiratory chain. The b-c1 complex mediates electron transfer from ubiquinol to cytochrome c. Contributes to the generation of a proton gradient across the mitochondrial membrane that is then used for ATP synthesis. The chain is Cytochrome b (MT-CYB) from Cerastes cerastes (Horned desert viper).